The primary structure comprises 344 residues: Beta-1,4-galactosyltransferase 4 (344 aa).

At 1-12 (MGCNPPYLLPYR) the chain is on the cytoplasmic side. Residues 13-38 (LRLLLFFTLCLTVVGWVTSNYFVDPI) form a helical; Signal-anchor for type II membrane protein membrane-spanning segment. The Lumenal portion of the chain corresponds to 39-344 (QVIPKAKVFM…NITVDFWTGV (306 aa)). A disulfide bridge connects residues Cys-77 and Cys-118. Residues 129–133 (PHRNR), 168–170 (FNR), and 195–196 (VD) contribute to the UDP-alpha-D-galactose site. Residues Cys-189 and Cys-208 are joined by a disulfide bond. Asp-196 serves as a coordination point for Mn(2+). An N-linked (GlcNAc...) asparagine glycan is attached at Asn-220. Tyr-224 and Trp-256 together coordinate UDP-alpha-D-galactose. Position 258–261 (258–261 (GEDD)) interacts with N-acetyl-D-glucosamine. A Mn(2+)-binding site is contributed by His-289. 289 to 291 (HTR) is a binding site for UDP-alpha-D-galactose. Arg-301 lines the N-acetyl-D-glucosamine pocket. Asn-335 carries N-linked (GlcNAc...) asparagine glycosylation.

The protein belongs to the glycosyltransferase 7 family. The cofactor is Mn(2+).

The protein localises to the golgi apparatus. Its subcellular location is the golgi stack membrane. The enzyme catalyses N-acetyl-D-glucosamine + UDP-alpha-D-galactose = beta-D-galactosyl-(1-&gt;4)-N-acetyl-D-glucosamine + UDP + H(+). The catalysed reaction is a beta-D-GlcNAc-(1-&gt;3)-beta-D-Gal-(1-&gt;4)-beta-D-Glc-(1&lt;-&gt;1)-Cer(d18:1(4E)) + UDP-alpha-D-galactose = a neolactoside nLc4Cer(d18:1(4E)) + UDP + H(+). Its pathway is protein modification; protein glycosylation. In terms of biological role, galactose (Gal) transferase involved in the biosynthesis of glycoproteins, proteoglycans, and glycosyphingolipids. Catalyzes the transfer of Gal residue via a beta1-&gt;4 linkage from UDP-Gal to the non-reducing terminal N-acetyl glucosamine 6-O-sulfate (6-O-sulfoGlcNAc) in the linearly growing chain of both N- and O-linked keratan sulfate proteoglycans. Cooperates with B3GNT7 N-acetyl glucosamine transferase and CHST6 and CHST1 sulfotransferases to construct and elongate mono- and disulfated disaccharide units [-&gt;3Galbeta1-&gt;4(6-sulfoGlcNAcbeta)1-&gt;] and [-&gt;3(6-sulfoGalbeta)1-&gt;4(6-sulfoGlcNAcbeta)1-&gt;] within keratan sulfate polymer. This is Beta-1,4-galactosyltransferase 4 (B4GALT4) from Cricetulus griseus (Chinese hamster).